Reading from the N-terminus, the 87-residue chain is MADRNQRKVYTGRVVSDKMDKTITVVVETYKKHGLYGKRVKYSKKFKAHDENNIAKTGDVVRISETRPLSATKHFRLLEVVEEAVII.

The protein belongs to the universal ribosomal protein uS17 family. Part of the 30S ribosomal subunit.

Its function is as follows. One of the primary rRNA binding proteins, it binds specifically to the 5'-end of 16S ribosomal RNA. The chain is Small ribosomal subunit protein uS17 from Listeria innocua serovar 6a (strain ATCC BAA-680 / CLIP 11262).